Consider the following 484-residue polypeptide: Monocarboxylate transporter 2 (484 aa).

Residues 1–16 (MPSEPSAPLPQPLPPD) are Cytoplasmic-facing. The chain crosses the membrane as a helical span at residues 17–37 (GGWGWVVVCASFISIGFSYAF). Residues 38–60 (PKAVTVFFKDIQEIFNTTSSQIA) lie on the Extracellular side of the membrane. A helical transmembrane segment spans residues 61 to 81 (WISSIMLAVMYAGGPISSVLV). Residues 82–90 (NNYGSRPVV) are Cytoplasmic-facing. The chain crosses the membrane as a helical span at residues 91 to 111 (IVGGLLCCIGMILASYSNSVI). Residues 112–116 (ELYLT) lie on the Extracellular side of the membrane. A helical transmembrane segment spans residues 117–137 (VGFIGGLGLAFNLQPALTIIG). The Cytoplasmic segment spans residues 138–149 (KYFYRRRPLANG). A helical membrane pass occupies residues 150-170 (CAMAGSPVFLSTLAPFNQYLF). Residues 171-174 (NNYG) lie on the Extracellular side of the membrane. A helical transmembrane segment spans residues 175–195 (WKGSFLILGGIFLHSCVAGCL). Topologically, residues 196-245 (MRPVGPSPNTKKSKSKVGSRHDSTLKKASKVSTAQKVNRFLDFSLFMHRG) are cytoplasmic. The helical transmembrane segment at 246-266 (FLIYLSGNVILFLGIFAPIIF) threads the bilayer. At 267-281 (LAQYAKHIGVDDYNS) the chain is on the extracellular side. Residues 282–302 (AFLLSVMAFIDMFARPSVGLI) form a helical membrane-spanning segment. At 303 to 311 (ANTSLIRPR) the chain is on the cytoplasmic side. The helical transmembrane segment at 312 to 332 (IQYLFSSAIIFTGICHLLCPL) threads the bilayer. Over 333-337 (ATTYS) the chain is Extracellular. The chain crosses the membrane as a helical span at residues 338–358 (ALVVYVVFFGLGFGSISSLLF). At 359-372 (ECLMDIVGATRFSS) the chain is on the cytoplasmic side. The helical transmembrane segment at 373-393 (AVGLTTIVECCPVLFGPPLAG) threads the bilayer. At 394–405 (KLLDITGEYKYL) the chain is on the extracellular side. A helical membrane pass occupies residues 406 to 426 (YIASGTVVLVSGTYLLIGNAI). Residues 427-484 (NYRLLDKERKREKAKKKKSASHASREMEALNRSKQDEVTVKASNAHNPPSDRDKESNI) are Cytoplasmic-facing. The segment at 438-484 (EKAKKKKSASHASREMEALNRSKQDEVTVKASNAHNPPSDRDKESNI) is disordered. 2 stretches are compositionally biased toward basic and acidic residues: residues 449-465 (ASRE…DEVT) and 475-484 (PSDRDKESNI).

This sequence belongs to the major facilitator superfamily. Monocarboxylate porter (TC 2.A.1.13) family. Homodimer. Interacts with GRID2IP. Interacts with EMB; interaction mediates SLC16A7 targeting to the plasma membrane. Interacts with isoform 2 of BSG. In terms of tissue distribution, detected in testis and in spermatozoa (at protein level).

Its subcellular location is the cell membrane. The protein localises to the cytoplasm. The protein resides in the basolateral cell membrane. The enzyme catalyses (S)-lactate(in) + H(+)(in) = (S)-lactate(out) + H(+)(out). It carries out the reaction 3-methyl-2-oxobutanoate(out) + H(+)(out) = 3-methyl-2-oxobutanoate(in) + H(+)(in). The catalysed reaction is acetoacetate(out) + H(+)(out) = acetoacetate(in) + H(+)(in). It catalyses the reaction (R)-3-hydroxybutanoate(out) + H(+)(out) = (R)-3-hydroxybutanoate(in) + H(+)(in). The enzyme catalyses 4-methyl-2-oxopentanoate(out) + H(+)(out) = 4-methyl-2-oxopentanoate(in) + H(+)(in). It carries out the reaction pyruvate(out) + H(+)(out) = pyruvate(in) + H(+)(in). The catalysed reaction is (S)-3-hydroxybutanoate(out) + H(+)(out) = (S)-3-hydroxybutanoate(in) + H(+)(in). Its activity is regulated as follows. Transport activity exhibits steep dependence on substrate concentration. Substrate concentration sensitivity of SLC16A7 arises from the strong inter-subunit cooperativity of the SLC16A7 dimer during transport. Inhibited by AR-C155858. Functionally, proton-coupled monocarboxylate symporter. Catalyzes the rapid transport across the plasma membrane of monocarboxylates such as L-lactate, pyruvate and ketone bodies, acetoacetate, beta-hydroxybutyrate and acetate. Dimerization is functionally required and both subunits work cooperatively in transporting substrate. The chain is Monocarboxylate transporter 2 (Slc16a7) from Mus musculus (Mouse).